The chain runs to 542 residues: Neutral amino acid transporter B(0) (542 aa).

Met-1 is subject to N-acetylmethionine. Topologically, residues 1 to 52 (MVADPPRGDSKGLAAAEPTANGGLALASIEDQGEAAGGCCGSRDRVRRCLRA) are cytoplasmic. The chain crosses the membrane as a helical span at residues 53–82 (NLLVLLTVVAVVVGVALGLGVSGAGGALAL). Residues 83 to 95 (GPERLSAFVFPGE) are Extracellular-facing. The helical transmembrane segment at 96–117 (LLLRLLRMIILPLVVCSLIGGA) threads the bilayer. Topologically, residues 118–131 (ASLDPGALGRLGAW) are cytoplasmic. Residues 132 to 154 (ALLFFLVTTLLASALGVALALAL) traverse the membrane as a helical segment. Over 155-225 (QPGAASAAIN…GTRVKVPVGQ (71 aa)) the chain is Extracellular. N-linked (GlcNAc...) asparagine glycosylation is found at Asn-164 and Asn-213. The chain crosses the membrane as a helical span at residues 226 to 249 (EVEGMNILGLVVFAIVFGVALRKL). The Cytoplasmic segment spans residues 250–258 (GPEGELLIR). The chain crosses the membrane as a helical span at residues 259–286 (FFNSFNEATMVLVSWIMWYAPVGIMFLV). At 287–307 (AGKIVEMEDVGLLFARLGKYI) the chain is on the extracellular side. A helical membrane pass occupies residues 308-329 (LCCLLGHAIHGLLVLPLIYFLF). At 330–334 (TRKNP) the chain is on the cytoplasmic side. The segment at residues 335-365 (YRFLWGIVTPLATAFGTSSSSATLPLMMKCV) is an intramembrane region (discontinuously helical). The Cytoplasmic portion of the chain corresponds to 366 to 374 (EENNGVAKH). Residues 375–401 (ISRFILPIGATVNMDGAALFQCVAAVF) form a helical membrane-spanning segment. Residues Gly-383, Thr-385, and Asn-387 each coordinate Na(+). Topologically, residues 402–414 (IAQLSEQSLDFVK) are extracellular. Positions 415–448 (IITILVTATASSVGAAGIPAGGVLTLAIILEAVN) form an intramembrane region, discontinuously helical. Residues 449-461 (LPVDHISLILAVD) are Extracellular-facing. The chain crosses the membrane as a helical span at residues 462-483 (WLVDRSCTVLNVEGDALGAGLL). Na(+) contacts are provided by Asn-472 and Asp-476. Residues 484 to 542 (QNYVDRTEVRSTEPELIQVKSELPLDPLPAPTEEGNPLLRHYRGPAGDATVASEKESVM) lie on the Cytoplasmic side of the membrane. A Phosphoserine modification is found at Ser-494. Thr-495 is modified (phosphothreonine). Ser-504, Ser-536, and Ser-540 each carry phosphoserine. A disordered region spans residues 509–542 (DPLPAPTEEGNPLLRHYRGPAGDATVASEKESVM).

This sequence belongs to the dicarboxylate/amino acid:cation symporter (DAACS) (TC 2.A.23) family. SLC1A5 subfamily. Homotrimer.

It is found in the cell membrane. Its subcellular location is the melanosome. It catalyses the reaction L-glutamine(out) + L-serine(in) + Na(+)(out) = L-glutamine(in) + L-serine(out) + Na(+)(in). It carries out the reaction L-glutamine(in) + L-serine(out) + Na(+)(out) = L-glutamine(out) + L-serine(in) + Na(+)(in). The enzyme catalyses L-threonine(in) + L-glutamine(out) + Na(+)(out) = L-threonine(out) + L-glutamine(in) + Na(+)(in). The catalysed reaction is L-threonine(out) + L-glutamine(in) + Na(+)(out) = L-threonine(in) + L-glutamine(out) + Na(+)(in). It catalyses the reaction L-asparagine(in) + L-glutamine(out) + Na(+)(out) = L-asparagine(out) + L-glutamine(in) + Na(+)(in). It carries out the reaction L-asparagine(out) + L-glutamine(in) + Na(+)(out) = L-asparagine(in) + L-glutamine(out) + Na(+)(in). The enzyme catalyses L-glutamine(in) + L-alanine(out) + Na(+)(out) = L-glutamine(out) + L-alanine(in) + Na(+)(in). The catalysed reaction is L-valine(out) + L-glutamine(in) + Na(+)(out) = L-valine(in) + L-glutamine(out) + Na(+)(in). It catalyses the reaction L-glutamine(in) + L-methionine(out) + Na(+)(out) = L-glutamine(out) + L-methionine(in) + Na(+)(in). It carries out the reaction L-glutamine(in) + L-glutamate(out) + Na(+)(out) + H(+)(out) = L-glutamine(out) + L-glutamate(in) + Na(+)(in) + H(+)(in). The enzyme catalyses D-serine(in) + L-glutamine(out) + Na(+)(out) = D-serine(out) + L-glutamine(in) + Na(+)(in). The catalysed reaction is D-serine(in) + L-alanine(out) + Na(+)(out) = D-serine(out) + L-alanine(in) + Na(+)(in). It catalyses the reaction nitrate(in) = nitrate(out). It carries out the reaction iodide(out) = iodide(in). The enzyme catalyses thiocyanate(in) = thiocyanate(out). In terms of biological role, sodium-coupled antiporter of neutral amino acids. In a tri-substrate transport cycle, exchanges neutral amino acids between the extracellular and intracellular compartments, coupled to the inward cotransport of at least one sodium ion. The preferred substrate is the essential amino acid L-glutamine, a precursor for biosynthesis of proteins, nucleotides and amine sugars as well as an alternative fuel for mitochondrial oxidative phosphorylation. Exchanges L-glutamine with other neutral amino acids such as L-serine, L-threonine and L-asparagine in a bidirectional way. Provides L-glutamine to proliferating stem and activated cells driving the metabolic switch toward cell differentiation. The transport cycle is usually pH-independent, with the exception of L-glutamate. Transports extracellular L-glutamate coupled to the cotransport of one proton and one sodium ion in exchange for intracellular L-glutamine counter-ion. May provide for L-glutamate uptake in glial cells regulating glutamine/glutamate cycle in the nervous system. Can transport D-amino acids. Mediates D-serine release from the retinal glia potentially affecting NMDA receptor function in retinal neurons. Displays sodium- and amino acid-dependent but uncoupled channel-like anion conductance with a preference SCN(-) &gt;&gt; NO3(-) &gt; I(-) &gt; Cl(-). Through binding of the fusogenic protein syncytin-1/ERVW-1 may mediate trophoblasts syncytialization, the spontaneous fusion of their plasma membranes, an essential process in placental development. This Macaca fascicularis (Crab-eating macaque) protein is Neutral amino acid transporter B(0) (SLC1A5).